The chain runs to 298 residues: Ribonuclease HII (298 aa).

Residues 1-57 (MIREPQKSAKAASKSSAPRARSSVAKATSTKATSSKAASSKAAPSKAGADAGAAKPR) form a disordered region. Residues 8 to 55 (SAKAASKSSAPRARSSVAKATSTKATSSKAASSKAAPSKAGADAGAAK) are compositionally biased toward low complexity. The 189-residue stretch at 85-273 (WPVAGCDEAG…VAAAWRKIEG (189 aa)) folds into the RNase H type-2 domain. Residues Asp-91, Glu-92, and Asp-182 each contribute to the a divalent metal cation site.

Belongs to the RNase HII family. It depends on Mn(2+) as a cofactor. Requires Mg(2+) as cofactor.

The protein resides in the cytoplasm. It catalyses the reaction Endonucleolytic cleavage to 5'-phosphomonoester.. Functionally, endonuclease that specifically degrades the RNA of RNA-DNA hybrids. The polypeptide is Ribonuclease HII (Rhodopseudomonas palustris (strain BisB5)).